A 163-amino-acid chain; its full sequence is NADH-quinone oxidoreductase subunit B (163 aa).

4 residues coordinate [4Fe-4S] cluster: Cys-32, Cys-33, Cys-98, and Cys-127.

Belongs to the complex I 20 kDa subunit family. As to quaternary structure, NDH-1 is composed of 14 different subunits. Subunits NuoB, C, D, E, F, and G constitute the peripheral sector of the complex. The cofactor is [4Fe-4S] cluster.

It localises to the cell inner membrane. It catalyses the reaction a quinone + NADH + 5 H(+)(in) = a quinol + NAD(+) + 4 H(+)(out). In terms of biological role, NDH-1 shuttles electrons from NADH, via FMN and iron-sulfur (Fe-S) centers, to quinones in the respiratory chain. Couples the redox reaction to proton translocation (for every two electrons transferred, four hydrogen ions are translocated across the cytoplasmic membrane), and thus conserves the redox energy in a proton gradient. This Pelobacter propionicus (strain DSM 2379 / NBRC 103807 / OttBd1) protein is NADH-quinone oxidoreductase subunit B.